The following is a 262-amino-acid chain: Biotin carboxyl carrier protein of acetyl-CoA carboxylase, chloroplastic (262 aa).

A chloroplast-targeting transit peptide spans 1 to 47; it reads MASSLAPATKAATNLRLTHSLRFSPKPNNLRFATKPGNTLLCTRVKA. 2 disordered regions span residues 53 to 84 and 125 to 185; these read ALDS…PSSS and IRKK…KSSL. Residues 132 to 160 show a composition bias toward pro residues; sequence PQPPPAPQPSVVYSPPPPALPPPPVPAST. Residues 161–185 show a composition bias toward low complexity; sequence PAPTLARATPTPTSAPAVKSAKSSL. A Biotinyl-binding domain is found at 185–261; sequence LPPLKSPMAG…SVDTPLFVIQ (77 aa). The residue at position 227 (Lys-227) is an N6-biotinyllysine.

Its subcellular location is the plastid. It is found in the chloroplast. It functions in the pathway lipid metabolism; fatty acid biosynthesis. Functionally, this protein is a component of the acetyl coenzyme A carboxylase complex; first, biotin carboxylase catalyzes the carboxylation of the carrier protein and then the transcarboxylase transfers the carboxyl group to form malonyl-CoA. The protein is Biotin carboxyl carrier protein of acetyl-CoA carboxylase, chloroplastic (ACCB-1) of Glycine max (Soybean).